Consider the following 229-residue polypeptide: NAD(P)H-hydrate epimerase (229 aa).

The region spanning 11–222 is the YjeF N-terminal domain; the sequence is YAAADIRAAE…DVGLDLSGAT (212 aa). Residue 59–63 coordinates (6S)-NADPHX; the sequence is NNGGD. Asn60 and Asp124 together coordinate K(+). Residues 128–136 and Asp164 each bind (6S)-NADPHX; that span reads GIGTTASPA. A K(+)-binding site is contributed by Ser167.

Belongs to the NnrE/AIBP family. Requires K(+) as cofactor.

The enzyme catalyses (6R)-NADHX = (6S)-NADHX. The catalysed reaction is (6R)-NADPHX = (6S)-NADPHX. Catalyzes the epimerization of the S- and R-forms of NAD(P)HX, a damaged form of NAD(P)H that is a result of enzymatic or heat-dependent hydration. This is a prerequisite for the S-specific NAD(P)H-hydrate dehydratase to allow the repair of both epimers of NAD(P)HX. This Clavibacter sepedonicus (Clavibacter michiganensis subsp. sepedonicus) protein is NAD(P)H-hydrate epimerase.